The following is a 182-amino-acid chain: SAGA-associated factor 11 homolog (182 aa).

The segment at 61–84 (GSGAAVEGEPEDSKPYTIVDQPDT) is disordered. An SGF11-type zinc finger spans residues 98–119 (CHCPNCNRIVAASRFAPHLEKC). The disordered stretch occupies residues 133–182 (RIANTRDVGTGNYFGGDEDDEDDADWSGEKRKKKISQVRTNGSKKNGKTS). The span at 148 to 158 (GDEDDEDDADW) shows a compositional bias: acidic residues.

Belongs to the SGF11 family. In terms of assembly, component of some SAGA transcription coactivator-HAT complexes. Within the SAGA complex, participates in a subcomplex of SAGA called the DUB module (deubiquitination module).

The protein localises to the nucleus. Its function is as follows. Component of the transcription regulatory histone acetylation (HAT) complex SAGA, a multiprotein complex that activates transcription by remodeling chromatin and mediating histone acetylation and deubiquitination. Within the SAGA complex, participates in a subcomplex that specifically deubiquitinates histone H2B. The SAGA complex is recruited to specific gene promoters by activators, where it is required for transcription. The protein is SAGA-associated factor 11 homolog of Anopheles gambiae (African malaria mosquito).